A 503-amino-acid polypeptide reads, in one-letter code: 2-isopropylmalate synthase (503 aa).

The Mn(2+) site is built by aspartate 1, histidine 189, histidine 191, and asparagine 225. Residues 1–254 (DGEQALQASL…STNINHKEIY (254 aa)) enclose the Pyruvate carboxyltransferase domain. The tract at residues 379-503 (SLKFFSVQSI…NKNLKNLKKQ (125 aa)) is regulatory domain.

The protein belongs to the alpha-IPM synthase/homocitrate synthase family. LeuA type 1 subfamily. Homodimer. The cofactor is Mn(2+).

The protein localises to the cytoplasm. The enzyme catalyses 3-methyl-2-oxobutanoate + acetyl-CoA + H2O = (2S)-2-isopropylmalate + CoA + H(+). The protein operates within amino-acid biosynthesis; L-leucine biosynthesis; L-leucine from 3-methyl-2-oxobutanoate: step 1/4. In terms of biological role, catalyzes the condensation of the acetyl group of acetyl-CoA with 3-methyl-2-oxobutanoate (2-ketoisovalerate) to form 3-carboxy-3-hydroxy-4-methylpentanoate (2-isopropylmalate). The chain is 2-isopropylmalate synthase from Buchnera aphidicola subsp. Uroleucon ambrosiae.